An 86-amino-acid polypeptide reads, in one-letter code: Large ribosomal subunit protein bL27c (86 aa).

Residues 1–20 (MAHKKGSGSTRNGRDSNAQR) form a disordered region. Residues 7–19 (SGSTRNGRDSNAQ) are compositionally biased toward polar residues.

It belongs to the bacterial ribosomal protein bL27 family.

The protein resides in the plastid. It localises to the chloroplast. This Guillardia theta (Cryptophyte) protein is Large ribosomal subunit protein bL27c (rpl27).